Here is a 367-residue protein sequence, read N- to C-terminus: Tetraacyldisaccharide 4'-kinase (367 aa).

68–75 (VLGGSGKT) is a binding site for ATP.

Belongs to the LpxK family.

It catalyses the reaction a lipid A disaccharide + ATP = a lipid IVA + ADP + H(+). It participates in glycolipid biosynthesis; lipid IV(A) biosynthesis; lipid IV(A) from (3R)-3-hydroxytetradecanoyl-[acyl-carrier-protein] and UDP-N-acetyl-alpha-D-glucosamine: step 6/6. In terms of biological role, transfers the gamma-phosphate of ATP to the 4'-position of a tetraacyldisaccharide 1-phosphate intermediate (termed DS-1-P) to form tetraacyldisaccharide 1,4'-bis-phosphate (lipid IVA). The chain is Tetraacyldisaccharide 4'-kinase from Chlamydia caviae (strain ATCC VR-813 / DSM 19441 / 03DC25 / GPIC) (Chlamydophila caviae).